The primary structure comprises 102 residues: MRTFTDFVSGAPIVRSLQKSTIRKYGYNLAPHMFLLLHVDELSIFSAYQASLPGEKKVDTERLKRDLCPRKPIEIKYFSQICNDMMNKKDRLGDVLRVCCPS.

This is an uncharacterized protein from Saccharomyces cerevisiae (strain ATCC 204508 / S288c) (Baker's yeast).